The primary structure comprises 94 residues: DNA-directed RNA polymerase subunit omega (94 aa).

Belongs to the RNA polymerase subunit omega family. In terms of assembly, the RNAP catalytic core consists of 2 alpha, 1 beta, 1 beta' and 1 omega subunit. When a sigma factor is associated with the core the holoenzyme is formed, which can initiate transcription.

It catalyses the reaction RNA(n) + a ribonucleoside 5'-triphosphate = RNA(n+1) + diphosphate. Its function is as follows. Promotes RNA polymerase assembly. Latches the N- and C-terminal regions of the beta' subunit thereby facilitating its interaction with the beta and alpha subunits. The sequence is that of DNA-directed RNA polymerase subunit omega from Limosilactobacillus fermentum (strain NBRC 3956 / LMG 18251) (Lactobacillus fermentum).